A 276-amino-acid chain; its full sequence is Putative pyruvate, phosphate dikinase regulatory protein (276 aa).

Residue 152-159 (GISRTSKT) participates in ADP binding.

This sequence belongs to the pyruvate, phosphate/water dikinase regulatory protein family. PDRP subfamily.

The catalysed reaction is N(tele)-phospho-L-histidyl/L-threonyl-[pyruvate, phosphate dikinase] + ADP = N(tele)-phospho-L-histidyl/O-phospho-L-threonyl-[pyruvate, phosphate dikinase] + AMP + H(+). It carries out the reaction N(tele)-phospho-L-histidyl/O-phospho-L-threonyl-[pyruvate, phosphate dikinase] + phosphate + H(+) = N(tele)-phospho-L-histidyl/L-threonyl-[pyruvate, phosphate dikinase] + diphosphate. Bifunctional serine/threonine kinase and phosphorylase involved in the regulation of the pyruvate, phosphate dikinase (PPDK) by catalyzing its phosphorylation/dephosphorylation. This is Putative pyruvate, phosphate dikinase regulatory protein from Staphylococcus carnosus (strain TM300).